Reading from the N-terminus, the 220-residue chain is Cell surface glycolipoprotein MPB83 (220 aa).

An N-terminal signal peptide occupies residues 1–24 (MINVQAKPAAAASLAAIAIAFLAG). A lipid anchor (N-palmitoyl cysteine) is attached at C25. Residue C25 is the site of S-diacylglycerol cysteine attachment. 2 O-linked (Man...) threonine glycosylation sites follow: T48 and T49. The 133-residue stretch at 83-215 (QDPVATAASN…ATVYMIDTVL (133 aa)) folds into the FAS1 domain.

In terms of assembly, interacts with host (human) TLR2. O-glycosylated. Contains 0-3 mannose residues attached to residues 48-49 in various configurations; the dominant glycoform is Thr-48(Man)/Thr-49(Man2) with an unusual Man(1-&gt;3)Man linkage, but Thr48(Man3)/Thr49(Man0) through to Thr48(Man0/)Thr49(Man3) are also seen. Post-translationally, when isolated from culture filtrate runs as 25 and 23 kDa proteins; the larger protein is much less abundant, mostly associated with the cell and starts at residue 28, the shorter is more abundant and starts at residue 48.

It is found in the cell membrane. It localises to the secreted. The protein resides in the cell wall. Functionally, induces expression of human (host) matrix metalloproteinase-9 (MMP9) in a TLR1/TLR2-dependent fashion; the acylated 20 first mature residues (residues 25-40) induce the most expression, but whole recombinant protein (non-acylated and non-glycosylated), and mannosylated but not acylated protein (residues 26-220) also induce expression. In Mycobacterium bovis (strain ATCC BAA-935 / AF2122/97), this protein is Cell surface glycolipoprotein MPB83 (mpb83).